Here is a 357-residue protein sequence, read N- to C-terminus: DNA polymerase IV (357 aa).

Positions 4–185 constitute a UmuC domain; the sequence is IIHCDCDCFY…LPVERLFGVG (182 aa). Residues Asp-8 and Asp-103 each coordinate Mg(2+). The active site involves Glu-104.

It belongs to the DNA polymerase type-Y family. Monomer. It depends on Mg(2+) as a cofactor.

Its subcellular location is the cytoplasm. The enzyme catalyses DNA(n) + a 2'-deoxyribonucleoside 5'-triphosphate = DNA(n+1) + diphosphate. In terms of biological role, poorly processive, error-prone DNA polymerase involved in untargeted mutagenesis. Copies undamaged DNA at stalled replication forks, which arise in vivo from mismatched or misaligned primer ends. These misaligned primers can be extended by PolIV. Exhibits no 3'-5' exonuclease (proofreading) activity. May be involved in translesional synthesis, in conjunction with the beta clamp from PolIII. The chain is DNA polymerase IV from Ralstonia nicotianae (strain ATCC BAA-1114 / GMI1000) (Ralstonia solanacearum).